We begin with the raw amino-acid sequence, 465 residues long: Ribulose bisphosphate carboxylase large chain (465 aa).

An N6,N6,N6-trimethyllysine modification is found at Lys-4. Residues Asn-113 and Thr-163 each contribute to the substrate site. The active-site Proton acceptor is the Lys-165. A substrate-binding site is contributed by Lys-167. Mg(2+) contacts are provided by Lys-191, Asp-193, and Glu-194. Lys-191 bears the N6-carboxylysine mark. His-284 serves as the catalytic Proton acceptor. The substrate site is built by Arg-285, His-317, and Ser-369.

It belongs to the RuBisCO large chain family. Type I subfamily. In terms of assembly, heterohexadecamer of 8 large chains and 8 small chains; disulfide-linked. The disulfide link is formed within the large subunit homodimers. The cofactor is Mg(2+). Post-translationally, the disulfide bond which can form in the large chain dimeric partners within the hexadecamer appears to be associated with oxidative stress and protein turnover.

It is found in the plastid. The protein resides in the chloroplast. The enzyme catalyses 2 (2R)-3-phosphoglycerate + 2 H(+) = D-ribulose 1,5-bisphosphate + CO2 + H2O. The catalysed reaction is D-ribulose 1,5-bisphosphate + O2 = 2-phosphoglycolate + (2R)-3-phosphoglycerate + 2 H(+). RuBisCO catalyzes two reactions: the carboxylation of D-ribulose 1,5-bisphosphate, the primary event in carbon dioxide fixation, as well as the oxidative fragmentation of the pentose substrate in the photorespiration process. Both reactions occur simultaneously and in competition at the same active site. This is Ribulose bisphosphate carboxylase large chain from Platytheca verticillata.